We begin with the raw amino-acid sequence, 470 residues long: ATP synthase subunit beta (470 aa).

Position 158 to 165 (158 to 165 (GGAGVGKT)) interacts with ATP.

It belongs to the ATPase alpha/beta chains family. F-type ATPases have 2 components, CF(1) - the catalytic core - and CF(0) - the membrane proton channel. CF(1) has five subunits: alpha(3), beta(3), gamma(1), delta(1), epsilon(1). CF(0) has three main subunits: a(1), b(2) and c(9-12). The alpha and beta chains form an alternating ring which encloses part of the gamma chain. CF(1) is attached to CF(0) by a central stalk formed by the gamma and epsilon chains, while a peripheral stalk is formed by the delta and b chains.

The protein resides in the cell membrane. The catalysed reaction is ATP + H2O + 4 H(+)(in) = ADP + phosphate + 5 H(+)(out). Produces ATP from ADP in the presence of a proton gradient across the membrane. The catalytic sites are hosted primarily by the beta subunits. The protein is ATP synthase subunit beta of Halalkalibacterium halodurans (strain ATCC BAA-125 / DSM 18197 / FERM 7344 / JCM 9153 / C-125) (Bacillus halodurans).